The chain runs to 253 residues: Small ribosomal subunit protein uS2 (253 aa).

The tract at residues 226–253 (QGADNADVEKELSESVEENSAEEVDDAE) is disordered. Over residues 239 to 253 (ESVEENSAEEVDDAE) the composition is skewed to acidic residues.

This sequence belongs to the universal ribosomal protein uS2 family.

The protein is Small ribosomal subunit protein uS2 of Lactobacillus delbrueckii subsp. bulgaricus (strain ATCC 11842 / DSM 20081 / BCRC 10696 / JCM 1002 / NBRC 13953 / NCIMB 11778 / NCTC 12712 / WDCM 00102 / Lb 14).